The chain runs to 92 residues: Large ribosomal subunit protein eL43A (92 aa).

Residues 39–60 (CSFCGKKTVKRGAAGIWTCSCC) form a C4-type zinc finger. Ser-40 carries the post-translational modification Phosphoserine.

Belongs to the eukaryotic ribosomal protein eL43 family. In terms of assembly, component of the large ribosomal subunit (LSU). Mature yeast ribosomes consist of a small (40S) and a large (60S) subunit. The 40S small subunit contains 1 molecule of ribosomal RNA (18S rRNA) and 33 different proteins (encoded by 57 genes). The large 60S subunit contains 3 rRNA molecules (25S, 5.8S and 5S rRNA) and 46 different proteins (encoded by 81 genes).

The protein resides in the cytoplasm. Its function is as follows. Component of the ribosome, a large ribonucleoprotein complex responsible for the synthesis of proteins in the cell. The small ribosomal subunit (SSU) binds messenger RNAs (mRNAs) and translates the encoded message by selecting cognate aminoacyl-transfer RNA (tRNA) molecules. The large subunit (LSU) contains the ribosomal catalytic site termed the peptidyl transferase center (PTC), which catalyzes the formation of peptide bonds, thereby polymerizing the amino acids delivered by tRNAs into a polypeptide chain. The nascent polypeptides leave the ribosome through a tunnel in the LSU and interact with protein factors that function in enzymatic processing, targeting, and the membrane insertion of nascent chains at the exit of the ribosomal tunnel. The polypeptide is Large ribosomal subunit protein eL43A (Saccharomyces cerevisiae (strain ATCC 204508 / S288c) (Baker's yeast)).